We begin with the raw amino-acid sequence, 309 residues long: Uricase-2 isozyme 2 (309 aa).

Active-site charge relay system residues include Lys18 and Thr64. The urate site is built by Thr64, Asp65, Phe166, Arg183, Val238, Gln239, and Asn265. The active-site Charge relay system is the His267.

The protein belongs to the uricase family. Homotetramer.

Its subcellular location is the peroxisome. The catalysed reaction is urate + O2 + H2O = 5-hydroxyisourate + H2O2. It functions in the pathway purine metabolism; urate degradation; (S)-allantoin from urate: step 1/3. In terms of biological role, catalyzes the oxidation of uric acid to 5-hydroxyisourate, which is further processed to form (S)-allantoin. The protein is Uricase-2 isozyme 2 of Glycine max (Soybean).